The sequence spans 342 residues: Protein BASIC PENTACYSTEINE6 (342 aa).

A coiled-coil region spans residues 41–67 (AIQERNLAISEKKAAVAERDMAFLQRD). The segment at 41–76 (AIQERNLAISEKKAAVAERDMAFLQRDTAIAERNNA) is alanine-zipper. Positions 143–199 (REMEPNDGLPTSPPAGSTLESAKPKRGKRVNPKATTQTAANKRGPKNQRKVKKESED) are disordered. A required for nucleus and nucleolus localization region spans residues 164–195 (AKPKRGKRVNPKATTQTAANKRGPKNQRKVKK). Over residues 185 to 194 (RGPKNQRKVK) the composition is skewed to basic residues. Positions 192–195 (KVKK) match the Nuclear localization signal motif.

This sequence belongs to the BBR/BPC family. In terms of assembly, homodimer. Heterodimer with BPC4. Expressed in seedlings, leaves and pistils. Detected in the base of flowers and tips of carpels, in sepal vasculature, in young rosette, in the lateral and tip of primary roots, and in ovule at the exception of the outer integument.

The protein localises to the nucleus. It localises to the nucleolus. Its function is as follows. Transcriptional regulator that specifically binds to GA-rich elements (GAGA-repeats) present in regulatory sequences of genes involved in developmental processes. In Arabidopsis thaliana (Mouse-ear cress), this protein is Protein BASIC PENTACYSTEINE6 (BPC6).